We begin with the raw amino-acid sequence, 610 residues long: tRNA uridine 5-carboxymethylaminomethyl modification enzyme MnmG (610 aa).

Gly-14–Gly-19 contributes to the FAD binding site. Residue Gly-274–Phe-288 participates in NAD(+) binding.

It belongs to the MnmG family. As to quaternary structure, homodimer. Heterotetramer of two MnmE and two MnmG subunits. The cofactor is FAD.

The protein localises to the cytoplasm. Its function is as follows. NAD-binding protein involved in the addition of a carboxymethylaminomethyl (cmnm) group at the wobble position (U34) of certain tRNAs, forming tRNA-cmnm(5)s(2)U34. This chain is tRNA uridine 5-carboxymethylaminomethyl modification enzyme MnmG, found in Chlamydia trachomatis serovar A (strain ATCC VR-571B / DSM 19440 / HAR-13).